The chain runs to 216 residues: Somatotropin (216 aa).

The N-terminal stretch at 1 to 25 (MAPGSWFSPLLIAVVTLGLPQGAAA) is a signal peptide. Zn(2+) is bound at residue His45. Cysteines 78 and 189 form a disulfide. Glu198 contributes to the Zn(2+) binding site. Cys206 and Cys214 are disulfide-bonded.

This sequence belongs to the somatotropin/prolactin family. Pituitary gland.

Its subcellular location is the secreted. Growth hormone plays an important role in growth control. The polypeptide is Somatotropin (GH) (Meleagris gallopavo (Wild turkey)).